Reading from the N-terminus, the 386-residue chain is Homoserine O-succinyltransferase (386 aa).

The 310-residue stretch at Asn-49–Leu-358 folds into the AB hydrolase-1 domain. Ser-156 serves as the catalytic Nucleophile. Residue Arg-226 coordinates substrate. Active-site residues include Asp-321 and His-354. Asp-355 is a binding site for substrate.

It belongs to the AB hydrolase superfamily. MetX family. Homodimer.

It is found in the cytoplasm. The enzyme catalyses L-homoserine + succinyl-CoA = O-succinyl-L-homoserine + CoA. It functions in the pathway amino-acid biosynthesis; L-methionine biosynthesis via de novo pathway; O-succinyl-L-homoserine from L-homoserine: step 1/1. Transfers a succinyl group from succinyl-CoA to L-homoserine, forming succinyl-L-homoserine. In Acinetobacter baumannii (strain ACICU), this protein is Homoserine O-succinyltransferase.